Here is a 1474-residue protein sequence, read N- to C-terminus: Alpha-2-macroglobulin (1474 aa).

A signal peptide spans 1–23 (MGKNKLLHPSLVLLLLVLLPTDA). An intrachain disulfide couples Cys48 to Cys86. N-linked (GlcNAc...) asparagine glycosylation is found at Asn55, Asn70, and Asn247. Disulfide bonds link Cys251–Cys299 and Cys269–Cys287. Asn396 and Asn410 each carry an N-linked (GlcNAc...) asparagine glycan. Cystine bridges form between Cys470–Cys563, Cys595–Cys771, Cys642–Cys689, Cys821–Cys849, Cys847–Cys883, Cys921–Cys1321, Cys1079–Cys1127, and Cys1352–Cys1467. The tract at residues 690 to 728 (PQLQQYEMHGPEGLRVGFYESDVMGRGHARLVHAEEPPT) is bait region. Residues Gln693 and Gln694 each participate in an isoglutamyl lysine isopeptide (Gln-Lys) (interchain with K-? in other proteins) cross-link. Inhibitory stretches follow at residues 704 to 709 (RVGFYE), 719 to 723 (RLVHA), and 730 to 735 (TVRKYF). A glycan (N-linked (GlcNAc...) asparagine) is linked at Asn869. Positions 972 to 975 (CGEQ) form a cross-link, isoglutamyl cysteine thioester (Cys-Gln). The N-linked (GlcNAc...) asparagine glycan is linked to Asn991. A glycan (N-linked (GlcNAc...) asparagine) is linked at Asn1424.

The protein belongs to the protease inhibitor I39 (alpha-2-macroglobulin) family. Homotetramer; disulfide-linked. In terms of tissue distribution, plasma.

The protein resides in the secreted. Its function is as follows. Is able to inhibit all four classes of proteinases by a unique 'trapping' mechanism. This protein has a peptide stretch, called the 'bait region' which contains specific cleavage sites for different proteinases. When a proteinase cleaves the bait region, a conformational change is induced in the protein which traps the proteinase. The entrapped enzyme remains active against low molecular weight substrates (activity against high molecular weight substrates is greatly reduced). Following cleavage in the bait region a thioester bond is hydrolyzed and mediates the covalent binding of the protein to the proteinase. This is Alpha-2-macroglobulin (A2M) from Pongo abelii (Sumatran orangutan).